The sequence spans 277 residues: Isoprenyl transferase 1 (277 aa).

Residues 1–30 (MAVRGILGRQRREYRTPEPHPSGARPPKLG) form a disordered region. The active site involves Asp42. Asp42 serves as a coordination point for Mg(2+). Residues 43-46 (GNGR), Trp47, Arg55, His59, and 87-89 (STE) contribute to the substrate site. Asn90 (proton acceptor) is an active-site residue. Substrate is bound by residues Trp91, Arg93, Arg210, and 216–218 (RTS). A Mg(2+)-binding site is contributed by Glu229.

It belongs to the UPP synthase family. As to quaternary structure, homodimer. The cofactor is Mg(2+).

In terms of biological role, catalyzes the condensation of isopentenyl diphosphate (IPP) with allylic pyrophosphates generating different type of terpenoids. This chain is Isoprenyl transferase 1, found in Streptomyces coelicolor (strain ATCC BAA-471 / A3(2) / M145).